Consider the following 351-residue polypeptide: Calcium release-activated calcium channel protein 1 (351 aa).

The span at 1–21 (MSVWTTANNSGLETPTKSPIT) shows a compositional bias: polar residues. Disordered stretches follow at residues 1–39 (MSVW…TGNH) and 71–141 (HAHP…EDLH). Topologically, residues 1-163 (MSVWTTANNS…SRAKLKASSK (163 aa)) are cytoplasmic. 2 stretches are compositionally biased toward low complexity: residues 22 to 33 (SSVPRAARSSAV) and 80 to 93 (SNSP…SNNS). The span at 94–106 (AGFQRTSISNSLL) shows a compositional bias: polar residues. A helical transmembrane segment spans residues 164 to 181 (TSALLSGFAMVAMVEVQL). The Extracellular segment spans residues 182–191 (DHDTNVPPGM). A helical transmembrane segment spans residues 192–212 (LIAFAICTTLLVAVHMLALMI). Over 213–248 (STCILPNIETVCNLHSISLVHESPHERLHWYIETAW) the chain is Cytoplasmic. A helical transmembrane segment spans residues 249-269 (AFSTLLGLILFLLEIAILCWV). Topologically, residues 270-277 (KFYDLSPP) are extracellular. A helical transmembrane segment spans residues 278–298 (AAWSACVVLIPVMIIFMAFAI). The Cytoplasmic segment spans residues 299 to 351 (HFYRSLVSHKYEVTVSGIRELEMLKEQMEQDHLEHHNNIRNNGMNYGASGDIV).

The protein belongs to the Orai family. In terms of assembly, hexamer.

The protein resides in the cell membrane. It catalyses the reaction Ca(2+)(in) = Ca(2+)(out). Its function is as follows. Pore-forming subunit of inward rectifying Ca(2+) release-activated Ca(2+) (CRAC) channels. Assembles in hexameric CRAC channels that mediate Ca(2+) influx upon depletion of endoplasmic reticulum Ca(2+) store and channel activation by Ca(2+) sensor Stim, a process known as store-operated Ca(2+) entry (SOCE). Regulates transcription factor NFAT nuclear import. The polypeptide is Calcium release-activated calcium channel protein 1 (Drosophila melanogaster (Fruit fly)).